The following is a 55-amino-acid chain: Large ribosomal subunit protein bL33 (55 aa).

This sequence belongs to the bacterial ribosomal protein bL33 family.

This is Large ribosomal subunit protein bL33 from Arthrobacter sp. (strain FB24).